A 261-amino-acid polypeptide reads, in one-letter code: Expansin-B2 (261 aa).

The signal sequence occupies residues 1–24; it reads MAGASAKVVAMLLSVLATYGFAAG. An Expansin-like EG45 domain is found at 51–157; the sequence is GGACGFKNTN…RRVPCYHRGL (107 aa). 3 disulfides stabilise this stretch: cysteine 54–cysteine 82, cysteine 85–cysteine 152, and cysteine 90–cysteine 96. Residues 170–256 form the Expansin-like CBD domain; that stretch reads VYLAVLVEFA…NWRANTNYGS (87 aa).

It belongs to the expansin family. Expansin B subfamily. As to expression, expressed in roots.

It localises to the secreted. It is found in the cell wall. The protein localises to the membrane. May cause loosening and extension of plant cell walls by disrupting non-covalent bonding between cellulose microfibrils and matrix glucans. No enzymatic activity has been found. May be required for rapid internodal elongation in deepwater rice during submergence. The polypeptide is Expansin-B2 (EXPB2) (Oryza sativa subsp. japonica (Rice)).